A 99-amino-acid chain; its full sequence is DNA-directed RNA polymerase subunit omega (99 aa).

It belongs to the RNA polymerase subunit omega family. In terms of assembly, the RNAP catalytic core consists of 2 alpha, 1 beta, 1 beta' and 1 omega subunit. When a sigma factor is associated with the core the holoenzyme is formed, which can initiate transcription.

It carries out the reaction RNA(n) + a ribonucleoside 5'-triphosphate = RNA(n+1) + diphosphate. In terms of biological role, promotes RNA polymerase assembly. Latches the N- and C-terminal regions of the beta' subunit thereby facilitating its interaction with the beta and alpha subunits. The protein is DNA-directed RNA polymerase subunit omega (rpoZ) of Deinococcus radiodurans (strain ATCC 13939 / DSM 20539 / JCM 16871 / CCUG 27074 / LMG 4051 / NBRC 15346 / NCIMB 9279 / VKM B-1422 / R1).